We begin with the raw amino-acid sequence, 264 residues long: Virulence plasmid protein pGP3-D (264 aa).

The protein is Virulence plasmid protein pGP3-D of Chlamydia psittaci (Chlamydophila psittaci).